The primary structure comprises 223 residues: Protein disulfide-isomerase-like protein EhSep2 (223 aa).

The N-terminal stretch at 1–17 (MALRSLTLLCAAAGASA) is a signal peptide. The 108-residue stretch at 18 to 125 (GAIELTPDNF…DELKKFAENE (108 aa)) folds into the Thioredoxin domain. A non-standard amino acid (selenocysteine) is located at residue selenocysteine 47. Positions 155–201 (EKRTEMLETLKKELADAESTHEALLKELQATYKESMDKLEKLKEESA) form a coiled coil. Residues 201-223 (APKIKLLKAATPAPKAEGAKDEV) form a disordered region. Residues 203-216 (KIKLLKAATPAPKA) are compositionally biased toward low complexity. Residues 220-223 (KDEV) carry the Prevents secretion from ER motif.

This sequence belongs to the protein disulfide isomerase family.

It localises to the endoplasmic reticulum lumen. In Emiliania huxleyi (Coccolithophore), this protein is Protein disulfide-isomerase-like protein EhSep2 (SEP2).